We begin with the raw amino-acid sequence, 134 residues long: Ribonuclease P protein component (134 aa).

This sequence belongs to the RnpA family. As to quaternary structure, consists of a catalytic RNA component (M1 or rnpB) and a protein subunit.

It carries out the reaction Endonucleolytic cleavage of RNA, removing 5'-extranucleotides from tRNA precursor.. Functionally, RNaseP catalyzes the removal of the 5'-leader sequence from pre-tRNA to produce the mature 5'-terminus. It can also cleave other RNA substrates such as 4.5S RNA. The protein component plays an auxiliary but essential role in vivo by binding to the 5'-leader sequence and broadening the substrate specificity of the ribozyme. The sequence is that of Ribonuclease P protein component from Pseudomonas putida (strain GB-1).